The sequence spans 215 residues: Adenylate kinase (215 aa).

10–15 (GTGKGT) is an ATP binding site. The NMP stretch occupies residues 30–59 (STGDMLRESVVLKNKIGMIIKNIIEEGKLV). AMP is bound by residues T31, R36, 57-59 (KLV), 85-88 (GFPR), and Q92. Positions 122–159 (GRRIHIQSGRIYHVKFKPPKIKDKDDLTGQTLITRKDD) are LID. Residues R123 and 132-133 (IY) contribute to the ATP site. Residues R156 and R167 each contribute to the AMP site. L200 lines the ATP pocket.

The protein belongs to the adenylate kinase family. As to quaternary structure, monomer.

The protein resides in the cytoplasm. It carries out the reaction AMP + ATP = 2 ADP. The protein operates within purine metabolism; AMP biosynthesis via salvage pathway; AMP from ADP: step 1/1. In terms of biological role, catalyzes the reversible transfer of the terminal phosphate group between ATP and AMP. Plays an important role in cellular energy homeostasis and in adenine nucleotide metabolism. The polypeptide is Adenylate kinase (Buchnera aphidicola subsp. Acyrthosiphon pisum (strain 5A)).